A 483-amino-acid polypeptide reads, in one-letter code: MDYLVTIGLEIHAQILTRSKMFCGCSADYAHAPPNTHVCPVCMGLPGALPVPNRRAIELAALTGLALNCRISNENVISRKNYFYADLPSGYQRSQYDDPLCVDGWVEIEGDHGPKRIGLTRVHIEEDTGKLVHTNDGGSLVDFNRAGVPLMEIVSKPDLSSPEEARRYFQKLRQILVWIGVNSGDMESGALRCDANVSVRPVGQQEYGAKVEIKNINSFRFVERALAYEIERQIRALKAGEPIVQSTRGWDETSGTTVAQRTKEFAEDYRYFPEPDIPPLHLTDVWIAERRAELPELPDARRRRFIEEYELTAYDAGVLTDERAVSDFYEQAVAAARIRGVTPKDVANWMTGEFFRLLKETGETLEIAAQRLRPDYIGEVQELLNQGVITRTSAKEAFEASFREGRSPATIVAERGLAVIGAGDALTDLVRQAITGNPKVVEEYRRGKATAIKFLIGQVMKASRGQANPQAVQQALEQELARE.

Belongs to the GatB/GatE family. GatB subfamily. Heterotrimer of A, B and C subunits.

The enzyme catalyses L-glutamyl-tRNA(Gln) + L-glutamine + ATP + H2O = L-glutaminyl-tRNA(Gln) + L-glutamate + ADP + phosphate + H(+). The catalysed reaction is L-aspartyl-tRNA(Asn) + L-glutamine + ATP + H2O = L-asparaginyl-tRNA(Asn) + L-glutamate + ADP + phosphate + 2 H(+). In terms of biological role, allows the formation of correctly charged Asn-tRNA(Asn) or Gln-tRNA(Gln) through the transamidation of misacylated Asp-tRNA(Asn) or Glu-tRNA(Gln) in organisms which lack either or both of asparaginyl-tRNA or glutaminyl-tRNA synthetases. The reaction takes place in the presence of glutamine and ATP through an activated phospho-Asp-tRNA(Asn) or phospho-Glu-tRNA(Gln). The sequence is that of Aspartyl/glutamyl-tRNA(Asn/Gln) amidotransferase subunit B from Roseiflexus castenholzii (strain DSM 13941 / HLO8).